The sequence spans 610 residues: Glutamine--fructose-6-phosphate aminotransferase [isomerizing] (610 aa).

Cysteine 2 (nucleophile; for GATase activity) is an active-site residue. The region spanning 2 to 218 is the Glutamine amidotransferase type-2 domain; that stretch reads CGIVGAVAQR…EGDVAEMTRR (217 aa). 2 SIS domains span residues 286–426 and 459–600; these read AAEI…QQQR and LAED…VDQP. The active-site For Fru-6P isomerization activity is lysine 605.

As to quaternary structure, homodimer.

It localises to the cytoplasm. The catalysed reaction is D-fructose 6-phosphate + L-glutamine = D-glucosamine 6-phosphate + L-glutamate. Its function is as follows. Catalyzes the first step in hexosamine metabolism, converting fructose-6P into glucosamine-6P using glutamine as a nitrogen source. This chain is Glutamine--fructose-6-phosphate aminotransferase [isomerizing], found in Vibrio cholerae serotype O1 (strain ATCC 39315 / El Tor Inaba N16961).